A 426-amino-acid polypeptide reads, in one-letter code: Trigger factor (426 aa).

One can recognise a PPIase FKBP-type domain in the interval 160–240 (GDTVIGDVTK…IKEVKHLELP (81 aa)).

This sequence belongs to the FKBP-type PPIase family. Tig subfamily.

The protein resides in the cytoplasm. The catalysed reaction is [protein]-peptidylproline (omega=180) = [protein]-peptidylproline (omega=0). Involved in protein export. Acts as a chaperone by maintaining the newly synthesized protein in an open conformation. Functions as a peptidyl-prolyl cis-trans isomerase. This is Trigger factor from Chlorobaculum tepidum (strain ATCC 49652 / DSM 12025 / NBRC 103806 / TLS) (Chlorobium tepidum).